The primary structure comprises 326 residues: Probable cell division protein WhiA (326 aa).

A DNA-binding region (H-T-H motif) is located at residues 275-308; it reads SLDELGRLADPPMTKDAIAGRIRRLLAMADKRAL.

Belongs to the WhiA family.

Functionally, involved in cell division and chromosome segregation. The chain is Probable cell division protein WhiA from Paenarthrobacter aurescens (strain TC1).